The sequence spans 376 residues: Probable allantoicase (376 aa).

This sequence belongs to the allantoicase family.

The catalysed reaction is allantoate + H2O = (S)-ureidoglycolate + urea. It functions in the pathway nitrogen metabolism; (S)-allantoin degradation; (S)-ureidoglycolate from allantoate (aminidohydrolase route): step 1/1. This chain is Probable allantoicase, found in Streptomyces coelicolor (strain ATCC BAA-471 / A3(2) / M145).